The sequence spans 564 residues: Potassium-transporting ATPase potassium-binding subunit (564 aa).

The next 10 membrane-spanning stretches (helical) occupy residues 4-24 (YDYLLLLAFFAIVLLPAPWLG), 67-87 (TLALLAFNLAGFLLLFAVLLL), 135-155 (IGLTVQNFVSAATGLAVLVAL), 179-199 (LYGLLPLCLVLALLLVWQGVP), 258-278 (FEVASIILIPVALVFTFGHYV), 286-306 (AIIACMLALFLIGGSTALWSE), 382-402 (AGLYGMLLFVLIAVFLAGLMI), 420-440 (LLVATLLVMPVGVLILGAIAA), 487-507 (VMIGLAMLIGRFGYILPVLAL), and 534-554 (LLLLTILLVGGLTFLPTLALG).

The protein belongs to the KdpA family. As to quaternary structure, the system is composed of three essential subunits: KdpA, KdpB and KdpC.

Its subcellular location is the cell inner membrane. In terms of biological role, part of the high-affinity ATP-driven potassium transport (or Kdp) system, which catalyzes the hydrolysis of ATP coupled with the electrogenic transport of potassium into the cytoplasm. This subunit binds the periplasmic potassium ions and delivers the ions to the membrane domain of KdpB through an intramembrane tunnel. The chain is Potassium-transporting ATPase potassium-binding subunit from Pseudomonas entomophila (strain L48).